A 330-amino-acid chain; its full sequence is Aspartate--ammonia ligase (330 aa).

This sequence belongs to the class-II aminoacyl-tRNA synthetase family. AsnA subfamily.

The protein localises to the cytoplasm. It catalyses the reaction L-aspartate + NH4(+) + ATP = L-asparagine + AMP + diphosphate + H(+). It participates in amino-acid biosynthesis; L-asparagine biosynthesis; L-asparagine from L-aspartate (ammonia route): step 1/1. The sequence is that of Aspartate--ammonia ligase from Yersinia enterocolitica serotype O:8 / biotype 1B (strain NCTC 13174 / 8081).